The chain runs to 651 residues: L-type lectin-domain containing receptor kinase IX.1 (651 aa).

A signal peptide spans 1-19 (MANSILLFSFVLVLPFVCS). Positions 20 to 251 (VQFNISRFGS…GNRLLSWEFS (232 aa)) are legume-lectin like. At 20–269 (VQFNISRFGS…KKSQNDKKGM (250 aa)) the chain is on the extracellular side. 8 N-linked (GlcNAc...) asparagine glycosylation sites follow: asparagine 23, asparagine 125, asparagine 129, asparagine 162, asparagine 169, asparagine 174, asparagine 195, and asparagine 211. A helical transmembrane segment spans residues 270–290 (IIGISVSGFVLLTFFITSLIV). Residues 291-651 (FLKRKQQKKK…VTFSSAQHGR (361 aa)) lie on the Cytoplasmic side of the membrane. The Protein kinase domain occupies 335–616 (FADDRKLGEG…LNLEAPVPHL (282 aa)). ATP is bound by residues 341–349 (LGEGGFGAV) and lysine 364. Aspartate 459 functions as the Proton acceptor in the catalytic mechanism. The interval 630 to 651 (SNTTSVSSGGATVTFSSAQHGR) is disordered.

The protein in the C-terminal section; belongs to the protein kinase superfamily. Ser/Thr protein kinase family. It in the N-terminal section; belongs to the leguminous lectin family. As to quaternary structure, interacts with ABCG40.

Its subcellular location is the cell membrane. The enzyme catalyses L-seryl-[protein] + ATP = O-phospho-L-seryl-[protein] + ADP + H(+). It catalyses the reaction L-threonyl-[protein] + ATP = O-phospho-L-threonyl-[protein] + ADP + H(+). Promotes hydrogen peroxide H(2)O(2) production and cell death. Functionally, involved in resistance response to the pathogenic oomycetes Phytophthora infestans and Phytophthora capsici. The protein is L-type lectin-domain containing receptor kinase IX.1 of Arabidopsis thaliana (Mouse-ear cress).